The following is a 446-amino-acid chain: Serine decarboxylase 3 (446 aa).

H162 is a substrate binding site. K274 is subject to N6-(pyridoxal phosphate)lysine.

This sequence belongs to the group II decarboxylase family. Pyridoxal 5'-phosphate is required as a cofactor.

The catalysed reaction is L-serine + H(+) = ethanolamine + CO2. Functionally, catalyzes the biosynthesis of ethanolamine from serine. Decarboxylation of free serine is the major source of ethanolamine production in plants and ethanolamine metabolism is crucial for the synthesis of choline, phosphatidylethanolamine (PE) and phosphatidylcholine (PC), and thus for plant growth. This is Serine decarboxylase 3 from Oryza sativa subsp. japonica (Rice).